We begin with the raw amino-acid sequence, 204 residues long: Minor allergen Cla h 7 (204 aa).

Positions 5–195 (IAIIFYSTWG…ELTAQGKAFY (191 aa)) constitute a Flavodoxin-like domain.

Belongs to the WrbA family.

The protein localises to the cytoplasm. In Davidiella tassiana (Mycosphaerella tassiana), this protein is Minor allergen Cla h 7 (CLAH7).